Consider the following 202-residue polypeptide: NADH-quinone oxidoreductase subunit B 2 (202 aa).

The [4Fe-4S] cluster site is built by cysteine 38, cysteine 39, cysteine 104, and cysteine 133.

Belongs to the complex I 20 kDa subunit family. NDH-1 is composed of 14 different subunits. Subunits NuoB, C, D, E, F, and G constitute the peripheral sector of the complex. Requires [4Fe-4S] cluster as cofactor.

The protein resides in the cell inner membrane. The catalysed reaction is a quinone + NADH + 5 H(+)(in) = a quinol + NAD(+) + 4 H(+)(out). NDH-1 shuttles electrons from NADH, via FMN and iron-sulfur (Fe-S) centers, to quinones in the respiratory chain. The immediate electron acceptor for the enzyme in this species is believed to be ubiquinone. Couples the redox reaction to proton translocation (for every two electrons transferred, four hydrogen ions are translocated across the cytoplasmic membrane), and thus conserves the redox energy in a proton gradient. The chain is NADH-quinone oxidoreductase subunit B 2 from Koribacter versatilis (strain Ellin345).